The following is a 461-amino-acid chain: Photosystem II CP43 reaction center protein (461 aa).

A propeptide spanning residues 1–2 (ME) is cleaved from the precursor. Position 3 is an N-acetylthreonine (threonine 3). Residue threonine 3 is modified to Phosphothreonine. A run of 5 helical transmembrane segments spans residues 57–81 (LFEV…PHLA), 122–143 (LIGP…KDKN), 166–188 (KAMY…RIIT), 243–263 (QPWA…LSYS), and 279–300 (WFNN…ASQS). Residue glutamate 355 participates in [CaMn4O5] cluster binding. Residues 435 to 459 (RARAAAAGFEKGIDRLTEPVLSLKP) traverse the membrane as a helical segment.

Belongs to the PsbB/PsbC family. PsbC subfamily. In terms of assembly, PSII is composed of 1 copy each of membrane proteins PsbA, PsbB, PsbC, PsbD, PsbE, PsbF, PsbH, PsbI, PsbJ, PsbK, PsbL, PsbM, PsbT, PsbX, PsbY, PsbZ, Psb30/Ycf12, at least 3 peripheral proteins of the oxygen-evolving complex and a large number of cofactors. It forms dimeric complexes. The cofactor is Binds multiple chlorophylls and provides some of the ligands for the Ca-4Mn-5O cluster of the oxygen-evolving complex. It may also provide a ligand for a Cl- that is required for oxygen evolution. PSII binds additional chlorophylls, carotenoids and specific lipids..

The protein localises to the plastid. It is found in the chloroplast thylakoid membrane. In terms of biological role, one of the components of the core complex of photosystem II (PSII). It binds chlorophyll and helps catalyze the primary light-induced photochemical processes of PSII. PSII is a light-driven water:plastoquinone oxidoreductase, using light energy to abstract electrons from H(2)O, generating O(2) and a proton gradient subsequently used for ATP formation. This Stigeoclonium helveticum (Green alga) protein is Photosystem II CP43 reaction center protein.